Consider the following 157-residue polypeptide: Protein Smg homolog (157 aa).

This sequence belongs to the Smg family.

This is Protein Smg homolog from Shewanella denitrificans (strain OS217 / ATCC BAA-1090 / DSM 15013).